The primary structure comprises 89 residues: Conotoxin Lt6.4 (89 aa).

Positions 1–22 (MKLTCVPIVAMLFLMACQLITA) are cleaved as a signal peptide. The propeptide occupies 23–50 (DYSREKHGYSAEKSSDKIQDSFYSKLTK). Cystine bridges form between Cys-52/Cys-67, Cys-59/Cys-71, and Cys-66/Cys-80.

The protein belongs to the conotoxin O1 superfamily. In terms of tissue distribution, expressed by the venom duct.

Its subcellular location is the secreted. This is Conotoxin Lt6.4 from Conus litteratus (Lettered cone).